The chain runs to 179 residues: Protein GrpE (179 aa).

A disordered region spans residues 1 to 20 (MSEETKEEIKNEKVDEEVTE).

The protein belongs to the GrpE family. In terms of assembly, homodimer.

It is found in the cytoplasm. Functionally, participates actively in the response to hyperosmotic and heat shock by preventing the aggregation of stress-denatured proteins, in association with DnaK and GrpE. It is the nucleotide exchange factor for DnaK and may function as a thermosensor. Unfolded proteins bind initially to DnaJ; upon interaction with the DnaJ-bound protein, DnaK hydrolyzes its bound ATP, resulting in the formation of a stable complex. GrpE releases ADP from DnaK; ATP binding to DnaK triggers the release of the substrate protein, thus completing the reaction cycle. Several rounds of ATP-dependent interactions between DnaJ, DnaK and GrpE are required for fully efficient folding. This is Protein GrpE from Lactococcus lactis subsp. lactis (strain IL1403) (Streptococcus lactis).